We begin with the raw amino-acid sequence, 130 residues long: Albumin-1 E (130 aa).

Residues Met-1–Ala-26 form the signal peptide. 3 disulfide bridges follow: Cys-29/Cys-46, Cys-33/Cys-48, and Cys-41/Cys-58. 2 propeptides span residues Val-64–Asn-69 and Leu-123–Ala-130.

In terms of processing, the C-terminal glycine may be removed from PA1b.

Functionally, PA1b binds to basic 7S globulin (BG) and stimulates its phosphorylation activity. Involved in the signal transduction system to regulate the growth and differentiation as a hormone peptide. Toxic to various insects through binding to a high affinity binding site in the insect gut. This is Albumin-1 E from Pisum sativum (Garden pea).